The primary structure comprises 76 residues: Waprin-Rha1 (76 aa).

Residues 1–24 form the signal peptide; sequence MQARVFLLLLGVILLGMMGPMVSA. The WAP domain maps to 25-75; sequence QDGKAGSCPDVNQPIPPLGVCKTTCATDSNCPDIQKCCKNGCGHMSCTRPS. 4 disulfides stabilise this stretch: Cys32–Cys62, Cys45–Cys66, Cys49–Cys61, and Cys55–Cys71.

Belongs to the venom waprin family. As to expression, expressed by the venom gland.

It localises to the secreted. Its function is as follows. Damages membranes of susceptible bacteria. Has no hemolytic activity. Not toxic to mice. Does not inhibit the proteinases elastase and cathepsin G. This is Waprin-Rha1 from Rhabdophis tigrinus tigrinus (Tiger keelback snake).